Consider the following 513-residue polypeptide: 2,3-bisphosphoglycerate-independent phosphoglycerate mutase (513 aa).

Residues Asp14 and Ser64 each coordinate Mn(2+). The active-site Phosphoserine intermediate is Ser64. Residues His125, 155-156, Arg187, Arg193, 259-262, and Lys333 contribute to the substrate site; these read RD and RADR. Positions 400, 404, 441, 442, and 460 each coordinate Mn(2+).

This sequence belongs to the BPG-independent phosphoglycerate mutase family. In terms of assembly, monomer. The cofactor is Mn(2+).

It carries out the reaction (2R)-2-phosphoglycerate = (2R)-3-phosphoglycerate. The protein operates within carbohydrate degradation; glycolysis; pyruvate from D-glyceraldehyde 3-phosphate: step 3/5. Catalyzes the interconversion of 2-phosphoglycerate and 3-phosphoglycerate. The chain is 2,3-bisphosphoglycerate-independent phosphoglycerate mutase from Pseudomonas fluorescens (strain ATCC BAA-477 / NRRL B-23932 / Pf-5).